We begin with the raw amino-acid sequence, 149 residues long: D-aminoacyl-tRNA deacylase (149 aa).

Residues 137 to 138 (GP) carry the Gly-cisPro motif, important for rejection of L-amino acids motif.

The protein belongs to the DTD family. As to quaternary structure, homodimer.

It is found in the cytoplasm. It catalyses the reaction glycyl-tRNA(Ala) + H2O = tRNA(Ala) + glycine + H(+). It carries out the reaction a D-aminoacyl-tRNA + H2O = a tRNA + a D-alpha-amino acid + H(+). Its function is as follows. An aminoacyl-tRNA editing enzyme that deacylates mischarged D-aminoacyl-tRNAs. Also deacylates mischarged glycyl-tRNA(Ala), protecting cells against glycine mischarging by AlaRS. Acts via tRNA-based rather than protein-based catalysis; rejects L-amino acids rather than detecting D-amino acids in the active site. By recycling D-aminoacyl-tRNA to D-amino acids and free tRNA molecules, this enzyme counteracts the toxicity associated with the formation of D-aminoacyl-tRNA entities in vivo and helps enforce protein L-homochirality. The sequence is that of D-aminoacyl-tRNA deacylase from Pediococcus pentosaceus (strain ATCC 25745 / CCUG 21536 / LMG 10740 / 183-1w).